Consider the following 243-residue polypeptide: Small ribosomal subunit protein uS3 (243 aa).

Residues 39–107 (LRKLISKELQ…KIKLNIKEIH (69 aa)) enclose the KH type-2 domain. Positions 212–243 (VAKSPAEPATTAPTPAPERRERQPRRNSNASA) are disordered.

It belongs to the universal ribosomal protein uS3 family. In terms of assembly, part of the 30S ribosomal subunit. Forms a tight complex with proteins S10 and S14.

Functionally, binds the lower part of the 30S subunit head. Binds mRNA in the 70S ribosome, positioning it for translation. This chain is Small ribosomal subunit protein uS3, found in Chloroflexus aurantiacus (strain ATCC 29364 / DSM 637 / Y-400-fl).